A 168-amino-acid polypeptide reads, in one-letter code: Cyclin-dependent kinase 4 inhibitor C (168 aa).

4 ANK repeats span residues 4 to 33 (PWGN…NVNA), 37 to 65 (FGRT…NPDL), 69 to 98 (TGFA…DVNI), and 102 to 132 (EGNL…NVGH).

This sequence belongs to the CDKN2 cyclin-dependent kinase inhibitor family. As to quaternary structure, heterodimer of p18 with CDK6. Highest levels found in skeletal muscle. Also found in pancreas and heart.

Interacts strongly with CDK6, weakly with CDK4. Inhibits cell growth and proliferation with a correlated dependence on endogenous retinoblastoma protein RB. The protein is Cyclin-dependent kinase 4 inhibitor C (CDKN2C) of Homo sapiens (Human).